The primary structure comprises 994 residues: Chloride channel protein 1 (994 aa).

Residues 1–118 lie on the Cytoplasmic side of the membrane; it reads MERSQSQRHG…VLRRKLGEDW (118 aa). Residues 119–150 form a helical membrane-spanning segment; that stretch reads IFLVLLGLLMALVSWCMDYVSAKSLQAYKWTY. At 151 to 158 the chain is on the extracellular side; it reads AQMKPSLP. A helical transmembrane segment spans residues 159–179; it reads LQYLAWVTFPLILILFSALFC. Residues 180-183 lie on the Cytoplasmic side of the membrane; that stretch reads QLIS. An intramembrane region (note=Loop between two helices) is located at residues 184-189; it reads PQAVGS. The Selectivity filter part_1 signature appears at 188–192; the sequence is GSGIP. S189 provides a ligand contact to chloride. An intramembrane region (helical) is located at residues 190–195; that stretch reads GIPEMK. Over 196–208 the chain is Cytoplasmic; it reads TILRGVVLKEYLT. The helical intramembrane region spans 209–224; sequence LKAFVAKVVALTAGLG. An intramembrane region (note=Loop between two helices) is located at residues 225–230; the sequence is SGIPVG. The Selectivity filter part_2 motif lies at 230–234; the sequence is GKEGP. An intramembrane region (helical) is located at residues 231 to 246; sequence KEGPFVHIASICAAVL. Residues 247–268 are Cytoplasmic-facing; that stretch reads SKFMSMFSGVYEQPYYYTDILT. 2 intramembrane regions (helical) span residues 269–280 and 281–290; these read VGCAVGVGCCFG and TPLGGVLFSI. Topologically, residues 291–301 are cytoplasmic; it reads EVTSTYFAVRN. Residues 302–321 traverse the membrane as a helical segment; that stretch reads YWRGFFAATFSAFVFRVLAV. Topologically, residues 322–347 are extracellular; the sequence is WNKDAVTITALFRTNFRMDFPFDLKE. Residues 348-376 traverse the membrane as a helical segment; that stretch reads LPAFAVIGICCGFLGAVFVYLHRQVMLGV. Over 377-390 the chain is Cytoplasmic; the sequence is RKHKCLSQFLAKHR. Residues 391 to 408 form a helical membrane-spanning segment; that stretch reads LLYPGIVTFVIASLTFPP. Over 409–414 the chain is Extracellular; that stretch reads GMGQFM. Residues 415-418 constitute an intramembrane region (note=Loop between two helices); sequence AGEL. An intramembrane region (helical) is located at residues 419-426; the sequence is MPREAIST. Topologically, residues 427 to 457 are extracellular; sequence LFDNNTWVKHIGDPQSLGQSAVWLHPQVNVI. The helical intramembrane region spans 458 to 475; it reads IIILLFFVMKFWMSIVAT. Positions 476–482 form an intramembrane region, note=Loop between two helices; sequence TMPIPCG. The short motif at 482 to 486 is the Selectivity filter part_3 element; that stretch reads GGFMP. The segment at residues 483-498 is an intramembrane region (helical); the sequence is GFMPVFVLGAAFGRLV. F484 contributes to the chloride binding site. At 499–521 the chain is on the extracellular side; it reads GEIMAMLFPEGILFDDIIYKILP. An intramembrane region (helical) is located at residues 522–538; the sequence is GGYAVIGAAALTGAVSH. Residues 539-540 constitute an intramembrane region (note=Loop between two helices); sequence TV. The helical intramembrane region spans 541 to 554; the sequence is STAVICFELTGQIA. Residues 555–557 are Extracellular-facing; that stretch reads HIL. Positions 558-571 form an intramembrane region, helical; sequence PMMVAVILANMVAQ. Residues 572-575 constitute an intramembrane region (note=Loop between two helices); it reads SLQP. Positions 576–578 form an intramembrane region, helical; that stretch reads SLY. Y578 lines the chloride pocket. The Cytoplasmic segment spans residues 579–994; the sequence is DSIIQVKKLP…DEEDEDELIL (416 aa). One can recognise a CBS 1 domain in the interval 609–668; the sequence is MVRDVKFVSASCTYGELRNLLQATTVKTLPLVDSKDSMILLGSVERSELQSLLQRHLCAE. Residues 710-770 are disordered; that stretch reads EDEDEDLSRK…PEASDSADQR (61 aa). Residues 725–739 show a composition bias toward pro residues; the sequence is TPAPPPPSPPPPPSQ. The region spanning 827–882 is the CBS 2 domain; the sequence is IDQSPFQLVEQTTLHKTHTLFSLLGLHLAYVTSMGKLRGVLALEELQKAIEGHTKS. 2 disordered regions span residues 886–954 and 971–994; these read LRPP…ARAE and ELAD…ELIL. S892 is modified (phosphoserine). The span at 933-943 shows a compositional bias: pro residues; it reads PETPVPPPSPE. The span at 985–994 shows a compositional bias: acidic residues; sequence DEEDEDELIL.

This sequence belongs to the chloride channel (TC 2.A.49) family. ClC-1/CLCN1 subfamily. In terms of assembly, homodimer. In terms of tissue distribution, predominantly expressed in skeletal muscles.

It is found in the cell membrane. The protein resides in the sarcolemma. It localises to the T-tubule. It carries out the reaction chloride(in) = chloride(out). It catalyses the reaction thiocyanate(in) = thiocyanate(out). The enzyme catalyses bromide(in) = bromide(out). The catalysed reaction is nitrate(in) = nitrate(out). It carries out the reaction iodide(out) = iodide(in). Its activity is regulated as follows. Modulated by membrane voltage with depolarization favouring channel opening and hyperpolarization favouring channel closure. Inhibited by acidic pH and ATP binding due to a shift of voltage dependence of common gating to more positive voltages. Inhibited by 9-anthracene-carboxylic. In terms of biological role, voltage-gated chloride channel involved in skeletal muscle excitability. Generates most of the plasma membrane chloride conductance in skeletal muscle fibers, stabilizes the resting membrane potential and contributes to the repolarization phase during action potential firing. Forms a homodimeric channel where each subunit has its own ion conduction pathway. Conducts double-barreled currents controlled by two types of gates, two fast glutamate gates that control each subunit independently and a slow common gate that opens and shuts off both subunits simultaneously. Has a significant open probability at muscle resting potential and is further activated upon membrane depolarization. Permeable to small monovalent anions with ion selectivity for chloride &gt; thiocyanate &gt; bromide &gt; nitrate &gt; iodide. In Mus musculus (Mouse), this protein is Chloride channel protein 1 (Clcn1).